The sequence spans 275 residues: 2,3,4,5-tetrahydropyridine-2,6-dicarboxylate N-succinyltransferase (275 aa).

R104 and D141 together coordinate substrate.

This sequence belongs to the transferase hexapeptide repeat family. Homotrimer.

Its subcellular location is the cytoplasm. It carries out the reaction (S)-2,3,4,5-tetrahydrodipicolinate + succinyl-CoA + H2O = (S)-2-succinylamino-6-oxoheptanedioate + CoA. The protein operates within amino-acid biosynthesis; L-lysine biosynthesis via DAP pathway; LL-2,6-diaminopimelate from (S)-tetrahydrodipicolinate (succinylase route): step 1/3. The protein is 2,3,4,5-tetrahydropyridine-2,6-dicarboxylate N-succinyltransferase of Haemophilus influenzae (strain 86-028NP).